The sequence spans 448 residues: Serine/threonine-protein phosphatase 2A regulatory subunit B'' subunit gamma (448 aa).

2 EF-hand domains span residues 268–303 and 336–371; these read PSAL…TLTC and KEPA…IQEQ. Aspartate 281, aspartate 283, asparagine 285, methionine 287, and glutamate 292 together coordinate Ca(2+).

The protein localises to the nucleus. It localises to the cytoplasm. Possible role in the regulation of cell death. This is Serine/threonine-protein phosphatase 2A regulatory subunit B'' subunit gamma (ppp2r3c) from Xenopus tropicalis (Western clawed frog).